The primary structure comprises 330 residues: Diacylglycerol acyltransferase/mycolyltransferase Ag85A (330 aa).

The signal sequence occupies residues 1–42 (MKFVDRFRGAVAGMLRRLVVEAMGVALLSALIGVVGSAPAEA). Residue 84-85 (LR) coordinates substrate. The segment at 100-110 (FEWYYQSGISV) is fibronectin-binding. Cys-129 and Cys-134 are joined by a disulfide. The substrate site is built by Ser-168 and Asp-196. Ser-168 functions as the Nucleophile in the catalytic mechanism. The active site involves Glu-272. Substrate-binding positions include 274–277 (LVRT), Lys-281, and 304–306 (HSW). The active site involves His-304.

It belongs to the mycobacterial A85 antigen family. In terms of assembly, homodimer.

The protein resides in the secreted. It localises to the cell wall. Its subcellular location is the cytoplasm. The catalysed reaction is an acyl-CoA + a 1,2-diacyl-sn-glycerol = a triacyl-sn-glycerol + CoA. The enzyme catalyses 2 alpha,alpha'-trehalose 6-mycolate = alpha,alpha'-trehalose 6,6'-bismycolate + alpha,alpha-trehalose. Functionally, the antigen 85 proteins (FbpA, FbpB, FbpC) are responsible for the high affinity of mycobacteria for fibronectin, a large adhesive glycoprotein, which facilitates the attachment of M.tuberculosis to murine alveolar macrophages (AMs). They also help to maintain the integrity of the cell wall by catalyzing the transfer of mycolic acids to cell wall arabinogalactan, and through the synthesis of alpha,alpha-trehalose dimycolate (TDM, cord factor). They catalyze the transfer of a mycoloyl residue from one molecule of alpha,alpha-trehalose monomycolate (TMM) to another TMM, leading to the formation of TDM. FbpA mediates triacylglycerol (TAG) formation with long-chain acyl-CoA as the acyl donor and 1,2-dipalmitoyl-sn-glycerol (1,2-dipalmitin) as the acyl acceptor. It has a preference for C26:0-CoA over C18:1-CoA. This Mycobacterium leprae (strain TN) protein is Diacylglycerol acyltransferase/mycolyltransferase Ag85A (fbpA).